Consider the following 827-residue polypeptide: Centrosomal protein of 95 kDa (827 aa).

5 disordered regions span residues 115–145 (ISES…ERTE), 183–249 (GDTA…MVPS), 308–372 (FLTS…MSEK), 388–476 (LGDR…DSCH), and 489–558 (ELRK…KASP). Residues 123 to 145 (SETEQYSKDSHGEEAGEDLERTE) show a composition bias toward basic and acidic residues. Residues 187-199 (HTFSQRSNGAQNS) show a composition bias toward polar residues. 2 stretches are compositionally biased toward basic and acidic residues: residues 327–343 (EATR…DENR) and 360–372 (PLTE…MSEK). Ser447, Ser449, and Ser451 each carry phosphoserine. 2 coiled-coil regions span residues 584–633 (LTKM…VKKE) and 701–795 (LQIQ…DDDA).

It is found in the cytoplasm. The protein resides in the cytoskeleton. It localises to the microtubule organizing center. The protein localises to the centrosome. Its subcellular location is the spindle pole. The sequence is that of Centrosomal protein of 95 kDa (Cep95) from Mus musculus (Mouse).